A 634-amino-acid chain; its full sequence is uncharacterized protein (634 aa).

This is an uncharacterized protein from Homo sapiens (Human).